The sequence spans 79 residues: Conotoxin Leo-O4 (79 aa).

An N-terminal signal peptide occupies residues Met-1–Ala-22. The propeptide occupies Asn-23 to Arg-51. 3 cysteine pairs are disulfide-bonded: Cys-53–Cys-70, Cys-60–Cys-74, and Cys-69–Cys-78.

Belongs to the conotoxin O1 superfamily. As to expression, expressed by the venom duct.

The protein localises to the secreted. This is Conotoxin Leo-O4 from Conus leopardus (Leopard cone).